The primary structure comprises 474 residues: Bifunctional protein HldE (474 aa).

Positions 1–318 (MKMTLPDFHC…ENAIRGRAET (318 aa)) are ribokinase. 195-198 (NLSE) contributes to the ATP binding site. The active site involves aspartate 264. Residues 344 to 474 (MTNGCFDILH…TNIIKAIKNQ (131 aa)) are cytidylyltransferase.

The protein in the N-terminal section; belongs to the carbohydrate kinase PfkB family. This sequence in the C-terminal section; belongs to the cytidylyltransferase family. As to quaternary structure, homodimer.

It catalyses the reaction D-glycero-beta-D-manno-heptose 7-phosphate + ATP = D-glycero-beta-D-manno-heptose 1,7-bisphosphate + ADP + H(+). The enzyme catalyses D-glycero-beta-D-manno-heptose 1-phosphate + ATP + H(+) = ADP-D-glycero-beta-D-manno-heptose + diphosphate. The protein operates within nucleotide-sugar biosynthesis; ADP-L-glycero-beta-D-manno-heptose biosynthesis; ADP-L-glycero-beta-D-manno-heptose from D-glycero-beta-D-manno-heptose 7-phosphate: step 1/4. It functions in the pathway nucleotide-sugar biosynthesis; ADP-L-glycero-beta-D-manno-heptose biosynthesis; ADP-L-glycero-beta-D-manno-heptose from D-glycero-beta-D-manno-heptose 7-phosphate: step 3/4. It participates in bacterial outer membrane biogenesis; LPS core biosynthesis. In terms of biological role, catalyzes the phosphorylation of D-glycero-D-manno-heptose 7-phosphate at the C-1 position to selectively form D-glycero-beta-D-manno-heptose-1,7-bisphosphate. Functionally, catalyzes the ADP transfer from ATP to D-glycero-beta-D-manno-heptose 1-phosphate, yielding ADP-D-glycero-beta-D-manno-heptose. The sequence is that of Bifunctional protein HldE from Photorhabdus laumondii subsp. laumondii (strain DSM 15139 / CIP 105565 / TT01) (Photorhabdus luminescens subsp. laumondii).